Here is a 79-residue protein sequence, read N- to C-terminus: Cyclin-dependent kinases regulatory subunit 2 (79 aa).

Lysine 4 is subject to N6-acetyllysine.

It belongs to the CKS family. In terms of assembly, forms a homohexamer that can probably bind six kinase subunits.

Its function is as follows. Binds to the catalytic subunit of the cyclin dependent kinases and is essential for their biological function. This chain is Cyclin-dependent kinases regulatory subunit 2 (CKS2), found in Bos taurus (Bovine).